We begin with the raw amino-acid sequence, 350 residues long: Glucose-6-phosphate 3-dehydrogenase (350 aa).

It belongs to the Gfo/Idh/MocA family.

The catalysed reaction is D-glucose 6-phosphate + NAD(+) = 3-dehydro-D-glucose 6-phosphate + NADH + H(+). It functions in the pathway antibiotic biosynthesis; kanosamine biosynthesis. In terms of biological role, involved in the biosynthesis of kanosamine (3-amino-3-deoxy-D-glucose), which is known to have antibiotic and antifungal properties, and to be a precursor of the antibiotic neotrehalosadiamine (3,3'-diamino-3,3'-dideoxy-alpha,beta-trehalose (NTD)). Catalyzes the oxidation of glucose 6-phosphate to 3-oxo-D-glucose 6-phosphate. It can only use NAD. The chain is Glucose-6-phosphate 3-dehydrogenase (ntdC) from Bacillus subtilis (strain 168).